Consider the following 262-residue polypeptide: tRNA pseudouridine synthase A (262 aa).

Residue D51 is the Nucleophile of the active site. Residue Y109 coordinates substrate.

Belongs to the tRNA pseudouridine synthase TruA family. As to quaternary structure, homodimer.

It carries out the reaction uridine(38/39/40) in tRNA = pseudouridine(38/39/40) in tRNA. In terms of biological role, formation of pseudouridine at positions 38, 39 and 40 in the anticodon stem and loop of transfer RNAs. The chain is tRNA pseudouridine synthase A from Aliivibrio salmonicida (strain LFI1238) (Vibrio salmonicida (strain LFI1238)).